The primary structure comprises 143 residues: ATP synthase subunit b', chloroplastic (143 aa).

Residues 12–31 (LPVMGLQVVLLSWLLEQILY) form a helical membrane-spanning segment.

This sequence belongs to the ATPase B chain family. F-type ATPases have 2 components, F(1) - the catalytic core - and F(0) - the membrane proton channel. F(1) has five subunits: alpha(3), beta(3), gamma(1), delta(1), epsilon(1). F(0) has four main subunits: a(1), b(1), b'(1) and c(10-14). The alpha and beta chains form an alternating ring which encloses part of the gamma chain. F(1) is attached to F(0) by a central stalk formed by the gamma and epsilon chains, while a peripheral stalk is formed by the delta, b and b' chains.

It is found in the plastid. It localises to the chloroplast thylakoid membrane. In terms of biological role, f(1)F(0) ATP synthase produces ATP from ADP in the presence of a proton or sodium gradient. F-type ATPases consist of two structural domains, F(1) containing the extramembraneous catalytic core and F(0) containing the membrane proton channel, linked together by a central stalk and a peripheral stalk. During catalysis, ATP synthesis in the catalytic domain of F(1) is coupled via a rotary mechanism of the central stalk subunits to proton translocation. Functionally, component of the F(0) channel, it forms part of the peripheral stalk, linking F(1) to F(0). The b'-subunit is a diverged and duplicated form of b found in plants and photosynthetic bacteria. The protein is ATP synthase subunit b', chloroplastic of Cyanidioschyzon merolae (strain NIES-3377 / 10D) (Unicellular red alga).